A 954-amino-acid polypeptide reads, in one-letter code: cGMP-specific 3',5'-cyclic phosphodiesterase alpha (954 aa).

At 1–259 (MMDTKVDQTI…NTFYSSFPFK (259 aa)) the chain is on the cytoplasmic side. A helical transmembrane segment spans residues 260 to 280 (LFLHSLYMIFICFIYFVVLYF). Residues 281-296 (MLLKKIYTHPFIFHLS) lie on the Extracellular side of the membrane. A helical transmembrane segment spans residues 297 to 317 (VLKFLFDIIFFLSFILYPLFL). At 318 to 327 (RLKRIDKIIY) the chain is on the cytoplasmic side. Residues 328 to 348 (SSYISSYIFVCVTFLYSFIIF) form a helical membrane-spanning segment. Residues 349–365 (KCSSYSVKMNSNTYQNN) lie on the Extracellular side of the membrane. A helical transmembrane segment spans residues 366–386 (FVFQNMLFLLINIIYICIFCF). At 387 to 401 (LKNYMILYSFLYNCR) the chain is on the cytoplasmic side. Residues 402–422 (FSIFCILFIFLYYYLFFSLDF) traverse the membrane as a helical segment. The Extracellular portion of the chain corresponds to 423 to 432 (YRIIHLPLDN). A helical transmembrane segment spans residues 433 to 453 (FFFPFLCFLFFSFLFIFKIIM). The Cytoplasmic portion of the chain corresponds to 454–954 (SLYYEYVYEK…LSKLELIKFE (501 aa)). The PDEase domain occupies 586-930 (NQEETKSFLS…ERWESHKNDN (345 aa)). His680 functions as the Proton donor in the catalytic mechanism. A 3',5'-cyclic GMP-binding site is contributed by 680 to 684 (HTSLH). Zn(2+)-binding residues include His684, His720, Asp721, and Asp832. Asp721, Asp832, and Gln884 together coordinate 3',5'-cyclic GMP. Asp721 is a Mg(2+) binding site.

Belongs to the cyclic nucleotide phosphodiesterase family. The cofactor is Zn(2+). It depends on Mg(2+) as a cofactor.

The protein resides in the membrane. It carries out the reaction 3',5'-cyclic GMP + H2O = GMP + H(+). Its pathway is purine metabolism; 3',5'-cyclic GMP degradation; GMP from 3',5'-cyclic GMP: step 1/1. Not inhibited by cAMP. Inhibited by zaprinast. In terms of biological role, specifically hydrolyzes the second messenger cGMP, which is a key regulator of many important physiological processes. In Plasmodium falciparum (isolate 3D7), this protein is cGMP-specific 3',5'-cyclic phosphodiesterase alpha.